We begin with the raw amino-acid sequence, 657 residues long: Glycogen debranching enzyme (657 aa).

Aspartate 334 (nucleophile) is an active-site residue. The active-site Proton donor is glutamate 369. The tract at residues 458–485 (ANGEQNRDGTNSNFSFNHGTEGLEADET) is disordered. Positions 465-475 (DGTNSNFSFNH) are enriched in polar residues.

The protein belongs to the glycosyl hydrolase 13 family.

The protein resides in the cytoplasm. It carries out the reaction Hydrolysis of (1-&gt;6)-alpha-D-glucosidic linkages to branches with degrees of polymerization of three or four glucose residues in limit dextrin.. It participates in glycan degradation; glycogen degradation. Its activity is regulated as follows. Slightly activated by Ca(2+). Inhibited by divalent cations such as Zn(2+), Cu(2+), Fe(2+), Mg(2+), Mn(2+), but only slightly inhibited by EDTA. In terms of biological role, removes maltotriose and maltotetraose chains that are attached by 1,6-alpha-linkage to the limit dextrin main chain, generating a debranched limit dextrin. Hydrolyzes the alpha-1,6-glycosidic linkages in amylopectin while does not hydrolyze the alpha-1,4-glycosidic linkages in amylose. Native glycogen is a poor substrate. This is Glycogen debranching enzyme from Dickeya chrysanthemi (Pectobacterium chrysanthemi).